Here is a 453-residue protein sequence, read N- to C-terminus: MADSSRGTYWITTFGCQMNKADSERMAGILESMGYCAGSGEDQADLVLYNTCTIRDNAEQKVYSYLGRQARRKRDNPALTLVVAGCVAQQEGESLLRRVPELDLVMGPQHANRLDTLLSQVEAGQQVVATDDHHILEDITTARRDSSLCAWVNVIYGCNERCTYCVVPSVRGQEQSRLPQAIRLEMEGLAASGYKEITLLGQNIDAYGRDLPGITPEGRRQNTLTDLLHHVHDVKGIERIRFATSHPRYFTERLIEACAELPKVCEHFHVPFQSGDDELLKAMARGYTTARYRRIVEQIRKLMPDAAISADAIVGFPGETDAQFRRTLELVDEIGFDLLNTAAYSPRPNTPAADWPDQVEEHVKVERLKELNALVERKAKACSQRYLGRVEEVLAEGINPKDNTQLMGRTRTNRLTFFPAGSHRVGDTVPVRIEQVRAFSLSGSAQAQPALVR.

Positions 7–123 (GTYWITTFGC…LDTLLSQVEA (117 aa)) constitute an MTTase N-terminal domain. [4Fe-4S] cluster contacts are provided by C16, C52, C86, C158, C162, and C165. Residues 144 to 381 (RDSSLCAWVN…NALVERKAKA (238 aa)) enclose the Radical SAM core domain. A TRAM domain is found at 384–447 (QRYLGRVEEV…AFSLSGSAQA (64 aa)).

The protein belongs to the methylthiotransferase family. MiaB subfamily. As to quaternary structure, monomer. Requires [4Fe-4S] cluster as cofactor.

It is found in the cytoplasm. The enzyme catalyses N(6)-dimethylallyladenosine(37) in tRNA + (sulfur carrier)-SH + AH2 + 2 S-adenosyl-L-methionine = 2-methylsulfanyl-N(6)-dimethylallyladenosine(37) in tRNA + (sulfur carrier)-H + 5'-deoxyadenosine + L-methionine + A + S-adenosyl-L-homocysteine + 2 H(+). Catalyzes the methylthiolation of N6-(dimethylallyl)adenosine (i(6)A), leading to the formation of 2-methylthio-N6-(dimethylallyl)adenosine (ms(2)i(6)A) at position 37 in tRNAs that read codons beginning with uridine. The protein is tRNA-2-methylthio-N(6)-dimethylallyladenosine synthase of Synechococcus sp. (strain RCC307).